The sequence spans 946 residues: Bifunctional glutamine synthetase adenylyltransferase/adenylyl-removing enzyme (946 aa).

The segment at 1 to 440 (MKPLSSPLQQ…VFNELIGDDE (440 aa)) is adenylyl removase. The tract at residues 449 to 946 (SEQWRELWQD…ASWQKWLVEE (498 aa)) is adenylyl transferase.

It belongs to the GlnE family. It depends on Mg(2+) as a cofactor.

It carries out the reaction [glutamine synthetase]-O(4)-(5'-adenylyl)-L-tyrosine + phosphate = [glutamine synthetase]-L-tyrosine + ADP. It catalyses the reaction [glutamine synthetase]-L-tyrosine + ATP = [glutamine synthetase]-O(4)-(5'-adenylyl)-L-tyrosine + diphosphate. Involved in the regulation of glutamine synthetase GlnA, a key enzyme in the process to assimilate ammonia. When cellular nitrogen levels are high, the C-terminal adenylyl transferase (AT) inactivates GlnA by covalent transfer of an adenylyl group from ATP to specific tyrosine residue of GlnA, thus reducing its activity. Conversely, when nitrogen levels are low, the N-terminal adenylyl removase (AR) activates GlnA by removing the adenylyl group by phosphorolysis, increasing its activity. The regulatory region of GlnE binds the signal transduction protein PII (GlnB) which indicates the nitrogen status of the cell. The polypeptide is Bifunctional glutamine synthetase adenylyltransferase/adenylyl-removing enzyme (Escherichia coli O7:K1 (strain IAI39 / ExPEC)).